A 213-amino-acid polypeptide reads, in one-letter code: A-type ATP synthase subunit D (213 aa).

It belongs to the V-ATPase D subunit family. As to quaternary structure, has multiple subunits with at least A(3), B(3), C, D, E, F, H, I and proteolipid K(x).

It is found in the cell membrane. Functionally, component of the A-type ATP synthase that produces ATP from ADP in the presence of a proton gradient across the membrane. This is A-type ATP synthase subunit D from Saccharolobus islandicus (strain L.S.2.15 / Lassen #1) (Sulfolobus islandicus).